The following is a 384-amino-acid chain: ATP synthase subunit a (384 aa).

Residues 22 to 60 form a disordered region; sequence PAPAAAPVEQHGAPAPEAAAPDAHAAPAGEHGAAVEAHA. 6 consecutive transmembrane segments (helical) span residues 131–151, 189–209, 218–238, 258–278, 293–313, and 319–339; these read KHVMMMWFASALLLVVVLAAV, FVPYLVTAFFFILFLNLFGLI, NLSVTVALALFTFLITQYAAI, LAPLWIIMIPVEFLGLFTKPF, FVILALLGLIFALGTPWVAFG, and LGIFLLELFVAFVQAYIFTML. The disordered stretch occupies residues 355–384; that stretch reads HGHAEEHGHAGPGMGSEHGSHVAGASPGHG.

This sequence belongs to the ATPase A chain family. In terms of assembly, F-type ATPases have 2 components, CF(1) - the catalytic core - and CF(0) - the membrane proton channel. CF(1) has five subunits: alpha(3), beta(3), gamma(1), delta(1), epsilon(1). CF(0) has three main subunits: a(1), b(2) and c(9-12). The alpha and beta chains form an alternating ring which encloses part of the gamma chain. CF(1) is attached to CF(0) by a central stalk formed by the gamma and epsilon chains, while a peripheral stalk is formed by the delta and b chains.

It localises to the cell inner membrane. Key component of the proton channel; it plays a direct role in the translocation of protons across the membrane. The polypeptide is ATP synthase subunit a (Anaeromyxobacter dehalogenans (strain 2CP-1 / ATCC BAA-258)).